A 141-amino-acid chain; its full sequence is Acetyltransferase YPN_1354 (141 aa).

The N-acetyltransferase domain occupies 1–141 (MEIRIFQQDD…GKRLIVDQEY (141 aa)).

The protein belongs to the acetyltransferase family. YpeA subfamily.

This is Acetyltransferase YPN_1354 from Yersinia pestis bv. Antiqua (strain Nepal516).